The primary structure comprises 493 residues: UDP-N-acetylmuramate--L-alanine ligase (493 aa).

An ATP-binding site is contributed by 112-118 (GTHGKTT).

This sequence belongs to the MurCDEF family.

It localises to the cytoplasm. The catalysed reaction is UDP-N-acetyl-alpha-D-muramate + L-alanine + ATP = UDP-N-acetyl-alpha-D-muramoyl-L-alanine + ADP + phosphate + H(+). It participates in cell wall biogenesis; peptidoglycan biosynthesis. Its function is as follows. Cell wall formation. The protein is UDP-N-acetylmuramate--L-alanine ligase of Nitrosospira multiformis (strain ATCC 25196 / NCIMB 11849 / C 71).